A 203-amino-acid chain; its full sequence is Outer-membrane lipoprotein LolB (203 aa).

The signal sequence occupies residues 1–22; it reads MPVNLNHTLLLCLLVAASLLSG. Cys-23 carries N-palmitoyl cysteine lipidation. Cys-23 carries S-diacylglycerol cysteine lipidation.

It belongs to the LolB family. As to quaternary structure, monomer.

It localises to the cell outer membrane. Plays a critical role in the incorporation of lipoproteins in the outer membrane after they are released by the LolA protein. This chain is Outer-membrane lipoprotein LolB, found in Shewanella denitrificans (strain OS217 / ATCC BAA-1090 / DSM 15013).